We begin with the raw amino-acid sequence, 53 residues long: Rubredoxin-1 (53 aa).

Residues 1–53 form the Rubredoxin-like domain; that stretch reads MEKFVCDVCGYIYDPVVGDPDNGVAPGTKFKDIPDTWVCPLCKLDKTHFSKVE. Cysteine 6, cysteine 9, cysteine 39, and cysteine 42 together coordinate Fe cation.

This sequence belongs to the rubredoxin family. The cofactor is Fe(3+).

Rubredoxin is a small nonheme, iron protein lacking acid-labile sulfide. Its single Fe, chelated to 4 Cys, functions as an electron acceptor and may also stabilize the conformation of the molecule. The chain is Rubredoxin-1 (rubR1) from Clostridium perfringens (strain 13 / Type A).